The sequence spans 214 residues: DNA-binding protein HupB (214 aa).

K3 is subject to N6-acetyllysine. K3 is modified (N6-succinyllysine). A phosphothreonine mark is found at T43 and T45. N6-acetyllysine occurs at positions 72, 86, and 103. The segment at 100-214 (PAVKRGVGAS…KKATARRGRK (115 aa)) is disordered. Low complexity predominate over residues 102–112 (VKRGVGASAAK). The residue at position 113 (K113) is an N6-succinyllysine. The span at 113-214 (KVAKKAPAKK…KKATARRGRK (102 aa)) shows a compositional bias: basic residues. 2 positions are modified to N6-acetyllysine: K116 and K133. At K142 the chain carries N6-succinyllysine. N6-acetyllysine occurs at positions 146 and 167.

Belongs to the bacterial histone-like protein family. Long actinobacterial subfamily. In terms of assembly, oligomerizes. Homodimer; the crystallized protein is missing the C-terminal 105 residues. Interacts with topoisomerase 1 (topA). Interacts with Eis. Interacts with NAD-dependent protein deacylase NPD (MRA_1161). Interacts with MRA_0812 CoA transferase. In terms of processing, phosphorylated in vivo on Ser and Thr-residues; the protein is degraded during purification so most sites were not identified, but at least one of Thr-43 and/or Thr-45 are modified in vivo. In vitro at least PknE, PknF and PknB phosphorylate HupB; PknE is the most active and phosphorylates many sites in vitro including Thr-43 and Thr-45. Acetylated on 8 Lys residues in vivo (probably by Eis). In vitro acetylated by Eis on 28 residues (strains H37Rv and H37Ra), many more than those identified in vivo. Also acetylated by MRA_0812. Deacetylated in vitro by NAD-dependent protein deacylase NPD (MRA_1161). Post-translationally, succinylated in vivo and in vitro by MRA_0812 and by Eis; only 3 residues are found to be succinylated in vivo, while 27 are modifed in vitro by MRA_0812 and 32 are succinylated by Eis. NAD-dependent protein deacylase (MRA_1161) desuccinylates this protein.

The protein resides in the cytoplasm. The protein localises to the nucleoid. The enzyme catalyses 4 Fe(2+) + O2 + 4 H(+) = 4 Fe(3+) + 2 H2O. Its activity is regulated as follows. Two trans-stilbene derivatives, 4,4'-[(E)-ethene-1,2 diylbis({5[(phenylcarbonyl)amino]benzene-2,1-diyl}sulfonylimino)] dibenzoic acid and its methoxy derivative 4,4'-[1,2-ethenediylbis({5-[(4-methoxybenzoyl)amino]-2,1phenylene}sulfonylimino)] dibenzoic acid, respectively SD1 and SD4, inhibit DNA binding with 50% inhibition at 20 uM for SD1 and 1.7 uM for SD4. SD1 and SD4 have minimal inhibitory concentrations of 400 and 800 uM on strain H37Ra respectively. A nucleoid-associated protein (NAP) that plays a role in local chromosome architecture. Binds DNA non-sequence specifically; in vitro phosphorylation of an N-terminal fragment decreases DNA-binding. Stimulates supercoiling relaxation by topoisomerase 1 (Top1, topA), at higher than 80 uM inhibits relaxation, has no effect on DNA gyrase; the effect is independent of DNA-binding. Increases the intervening strand passage activity of Top1 that occurs between the two catalytic trans-esterification reactions. Does not bind ssDNA, probably helps condense chromosomes. Binds dsDNA; in vitro acetylated protein binds 10-fold less well to DNA (note in vitro acetylated protein is more heavily modified than in vivo modified protein). In vitro acetylated protein compacts DNA less well than unmodified protein. In vitro succinylated DNA bind dsDNA less well than unmodified protein (note in vitro succinylated protein is more heavily modified than in vivo modified protein). In terms of biological role, has ferroxidase activity, converts Fe(2+) into Fe(3+). Binds Fe(3+) but not Fe(2+); prevents the generation of hydroxyl radicals by the Fenton reaction and thus protects DNA from damage. May function in iron storage. Its function is as follows. Required for biofilm formation; trimethylation by recombinant human SUV39H1 (a histone methyltransferase) inhibits biofilm formation. Probably influences transcription. RNase E and HupB jointly contribute to cellular adaptation to changing growth conditions and survival during antibiotic treatment and in the host. The polypeptide is DNA-binding protein HupB (Mycobacterium tuberculosis (strain ATCC 25177 / H37Ra)).